Consider the following 786-residue polypeptide: Zinc finger transcription factor YRM1 (786 aa).

Positions 1-25 (MSKRGSLQDRASPSEETVKKAQKRR) are disordered. Positions 31-59 (CAFCRKRKLRCDQQKPMCSTCKTRGRSGC) form a DNA-binding region, zn(2)-C6 fungal-type. The interval 721–747 (PLAGNSPGLPPEEVRNNSENASHNNET) is disordered. Residues 737–747 (NSENASHNNET) are compositionally biased toward polar residues.

Its subcellular location is the cytoplasm. It localises to the nucleus. In terms of biological role, transcription factor involved in the regulation of multidrug resistance genes. Acts in concert with YRR1. This is Zinc finger transcription factor YRM1 (YRM1) from Saccharomyces cerevisiae (strain ATCC 204508 / S288c) (Baker's yeast).